Reading from the N-terminus, the 375-residue chain is MAENAGFISVPWGQHKLGAMYNTPFPSISRPKCIGVCSINASREFVDDASCASYLAGQPWPPLPFDLNGGIEDVIRKPVENGKRDLEIMLTYIKQHQKELLRQSSSDARNLRLDSDFVTLRGILRQIMCLQYDNRSFRVKATLLNGNVYMCKEETPEQQLENANMSRAQRVMCSWGFKFEQYLTSAQAQGKPVTNVPVNEAEEFMGVYRTNLAGILMLYGAELDCVDSKEPVDFKDCRVLDSLKFVELKTSVFNMNPHQIRTFKSFKSANWWSQSFLVGITTLYVGLRDTKGMLQRIDEIDVATLARNKPWSASAMAWYLEQFLRNLKKLLVNINDPFAVVQVTFLNKHASYEVLRGPEHQILPNWYRDLLKTRS.

Residues R43 and 120-122 (LRG) each bind substrate. Residues E180, E222, D224, E247, and L248 each coordinate Mg(2+). E222 serves as a coordination point for substrate. Residues K249 and Q274 each contribute to the substrate site.

The protein belongs to the DXO/Dom3Z family. As to quaternary structure, interacts with Rat1. Mg(2+) is required as a cofactor.

The enzyme catalyses a 5'-end triphospho-ribonucleoside in mRNA + H2O = a 5'-end phospho-ribonucleoside in mRNA + diphosphate + H(+). It carries out the reaction a 5'-end NAD(+)-phospho-ribonucleoside in mRNA + H2O = a 5'-end phospho-ribonucleoside in mRNA + NAD(+) + H(+). It catalyses the reaction a 5'-end (N(7)-methyl 5'-triphosphoguanosine)-ribonucleoside-ribonucleotide in mRNA + H2O = a (N(7)-methyl 5'-triphosphoguanosine)-nucleoside + a 5'-end phospho-ribonucleoside in mRNA + H(+). Its function is as follows. Decapping enzyme for NAD-capped RNAs: specifically hydrolyzes the nicotinamide adenine dinucleotide (NAD) cap from a subset of RNAs by removing the entire NAD moiety from the 5'-end of an NAD-capped RNA. The NAD-cap is present at the 5'-end of some RNAs and snoRNAs. In contrast to the canonical 5'-end N7 methylguanosine (m7G) cap, the NAD cap promotes mRNA decay. Also acts as a non-canonical decapping enzyme that removes the entire cap structure of m7G capped or incompletely capped RNAs and mediates their subsequent degradation. Specifically degrades pre-mRNAs with a defective 5'-end m7G cap and is part of a pre-mRNA capping quality control. Possesses 5'-pyrophosphohydrolase activity, hydrolyzing the 5'-end triphosphate to release pyrophosphates, and 5'-3' exonuclease activity. May be involved in RNA degradation in the nucleus. The protein is Decapping and exoribonuclease protein Rai1 of Drosophila melanogaster (Fruit fly).